Reading from the N-terminus, the 165-residue chain is Large ribosomal subunit protein uL11 (165 aa).

Ser-38 bears the Phosphoserine mark. A Glycyl lysine isopeptide (Lys-Gly) (interchain with G-Cter in SUMO2) cross-link involves residue Lys-40. Lys-48 participates in a covalent cross-link: Glycyl lysine isopeptide (Lys-Gly) (interchain with G-Cter in ubiquitin). Lys-54 carries the post-translational modification N6-acetyllysine. Lys-83 is covalently cross-linked (Glycyl lysine isopeptide (Lys-Gly) (interchain with G-Cter in ubiquitin)). Ser-165 bears the Phosphoserine mark.

It belongs to the universal ribosomal protein uL11 family. Component of the large ribosomal subunit. Mature ribosomes consist of a small (40S) and a large (60S) subunit. The 40S subunit contains about 33 different proteins and 1 molecule of RNA (18S). The 60S subunit contains about 49 different proteins and 3 molecules of RNA (28S, 5.8S and 5S). Ubiquitinated at Lys-48 and Lys-83 by RNF14 and RNF25 in response to ribosome collisions (ribosome stalling).

Its subcellular location is the cytoplasm. Functionally, component of the large ribosomal subunit. The ribosome is a large ribonucleoprotein complex responsible for the synthesis of proteins in the cell. Binds directly to 26S ribosomal RNA. The polypeptide is Large ribosomal subunit protein uL11 (RPL12) (Chinchilla lanigera (Long-tailed chinchilla)).